A 132-amino-acid chain; its full sequence is UPF0299 membrane protein YohJ (132 aa).

4 helical membrane passes run 8–28, 31–51, 63–83, and 93–113; these read IWQY…GIFI, LLPV…VLLA, GCYL…VGVM, and FGPV…VVSW.

Belongs to the UPF0299 family.

It is found in the cell inner membrane. This is UPF0299 membrane protein YohJ from Escherichia fergusonii (strain ATCC 35469 / DSM 13698 / CCUG 18766 / IAM 14443 / JCM 21226 / LMG 7866 / NBRC 102419 / NCTC 12128 / CDC 0568-73).